We begin with the raw amino-acid sequence, 660 residues long: Bifunctional polymyxin resistance protein ArnA (660 aa).

Positions 1 to 304 (MKTVVFAYHD…TLGLVQGSRL (304 aa)) are formyltransferase ArnAFT. 86-88 (HLI) is a (6R)-10-formyltetrahydrofolate binding site. His104 acts as the Proton donor; for formyltransferase activity in catalysis. (6R)-10-formyltetrahydrofolate-binding positions include Arg114 and 136–140 (VKRAD). The segment at 314–660 (RRTRVLILGV…RTVDLTDKPS (347 aa)) is dehydrogenase ArnADH. NAD(+) contacts are provided by residues Asp347 and 368–369 (DI). UDP-alpha-D-glucuronate contacts are provided by residues Ala393, Tyr398, and 432–433 (TS). Glu434 functions as the Proton acceptor; for decarboxylase activity in the catalytic mechanism. UDP-alpha-D-glucuronate is bound by residues Arg460, Asn492, 526-535 (KLIDGGKQKR), and Tyr613. Catalysis depends on Arg619, which acts as the Proton donor; for decarboxylase activity.

In the N-terminal section; belongs to the Fmt family. UDP-L-Ara4N formyltransferase subfamily. This sequence in the C-terminal section; belongs to the NAD(P)-dependent epimerase/dehydratase family. UDP-glucuronic acid decarboxylase subfamily. Homohexamer, formed by a dimer of trimers.

The enzyme catalyses UDP-alpha-D-glucuronate + NAD(+) = UDP-beta-L-threo-pentopyranos-4-ulose + CO2 + NADH. It carries out the reaction UDP-4-amino-4-deoxy-beta-L-arabinose + (6R)-10-formyltetrahydrofolate = UDP-4-deoxy-4-formamido-beta-L-arabinose + (6S)-5,6,7,8-tetrahydrofolate + H(+). It functions in the pathway nucleotide-sugar biosynthesis; UDP-4-deoxy-4-formamido-beta-L-arabinose biosynthesis; UDP-4-deoxy-4-formamido-beta-L-arabinose from UDP-alpha-D-glucuronate: step 1/3. The protein operates within nucleotide-sugar biosynthesis; UDP-4-deoxy-4-formamido-beta-L-arabinose biosynthesis; UDP-4-deoxy-4-formamido-beta-L-arabinose from UDP-alpha-D-glucuronate: step 3/3. It participates in bacterial outer membrane biogenesis; lipopolysaccharide biosynthesis. Bifunctional enzyme that catalyzes the oxidative decarboxylation of UDP-glucuronic acid (UDP-GlcUA) to UDP-4-keto-arabinose (UDP-Ara4O) and the addition of a formyl group to UDP-4-amino-4-deoxy-L-arabinose (UDP-L-Ara4N) to form UDP-L-4-formamido-arabinose (UDP-L-Ara4FN). The modified arabinose is attached to lipid A and is required for resistance to polymyxin and cationic antimicrobial peptides. In Escherichia coli O127:H6 (strain E2348/69 / EPEC), this protein is Bifunctional polymyxin resistance protein ArnA.